The chain runs to 345 residues: S-adenosylmethionine:tRNA ribosyltransferase-isomerase (345 aa).

It belongs to the QueA family. As to quaternary structure, monomer.

Its subcellular location is the cytoplasm. The catalysed reaction is 7-aminomethyl-7-carbaguanosine(34) in tRNA + S-adenosyl-L-methionine = epoxyqueuosine(34) in tRNA + adenine + L-methionine + 2 H(+). It functions in the pathway tRNA modification; tRNA-queuosine biosynthesis. In terms of biological role, transfers and isomerizes the ribose moiety from AdoMet to the 7-aminomethyl group of 7-deazaguanine (preQ1-tRNA) to give epoxyqueuosine (oQ-tRNA). This chain is S-adenosylmethionine:tRNA ribosyltransferase-isomerase, found in Helicobacter pylori (strain ATCC 700392 / 26695) (Campylobacter pylori).